The sequence spans 268 residues: Zygote formation protein zyg1 (268 aa).

Plays an essential role in zygote formation by inducing sexual cell fusion. Overexpressing cells eventually formed many loose mounds, in which giant multinucleate cells were surrounded by normal-sized cells. This is Zygote formation protein zyg1 (zyg1) from Dictyostelium mucoroides (Slime mold).